The sequence spans 713 residues: Phosphoribosylformylglycinamidine synthase subunit PurL (713 aa).

Residue His-32 is part of the active site. Residue Tyr-35 coordinates ATP. Glu-76 serves as a coordination point for Mg(2+). Substrate-binding positions include 77–80 (SHNH) and Arg-99. His-78 (proton acceptor) is an active-site residue. Asp-100 provides a ligand contact to Mg(2+). Residue Gln-224 coordinates substrate. Position 252 (Asp-252) interacts with Mg(2+). 296 to 298 (ESQ) contributes to the substrate binding site. Asp-471 and Gly-508 together coordinate ATP. Asn-509 is a Mg(2+) binding site. Ser-511 contributes to the substrate binding site.

This sequence belongs to the FGAMS family. In terms of assembly, monomer. Part of the FGAM synthase complex composed of 1 PurL, 1 PurQ and 2 PurS subunits.

The protein localises to the cytoplasm. It carries out the reaction N(2)-formyl-N(1)-(5-phospho-beta-D-ribosyl)glycinamide + L-glutamine + ATP + H2O = 2-formamido-N(1)-(5-O-phospho-beta-D-ribosyl)acetamidine + L-glutamate + ADP + phosphate + H(+). It participates in purine metabolism; IMP biosynthesis via de novo pathway; 5-amino-1-(5-phospho-D-ribosyl)imidazole from N(2)-formyl-N(1)-(5-phospho-D-ribosyl)glycinamide: step 1/2. Its function is as follows. Part of the phosphoribosylformylglycinamidine synthase complex involved in the purines biosynthetic pathway. Catalyzes the ATP-dependent conversion of formylglycinamide ribonucleotide (FGAR) and glutamine to yield formylglycinamidine ribonucleotide (FGAM) and glutamate. The FGAM synthase complex is composed of three subunits. PurQ produces an ammonia molecule by converting glutamine to glutamate. PurL transfers the ammonia molecule to FGAR to form FGAM in an ATP-dependent manner. PurS interacts with PurQ and PurL and is thought to assist in the transfer of the ammonia molecule from PurQ to PurL. The polypeptide is Phosphoribosylformylglycinamidine synthase subunit PurL (Thermococcus kodakarensis (strain ATCC BAA-918 / JCM 12380 / KOD1) (Pyrococcus kodakaraensis (strain KOD1))).